The chain runs to 338 residues: MKRLALALKQKKVASWKLEEVKELTELIKNSNTILIGSLEGFPADKLHEIRKKLRGKAIIKVTKNTLFKIAAKNAGINTEKLEQYLTGPNVFIFTKDNPFLTNMFFENYKLRRYAMPGDKAEEEVIIPAGDTGMPAGPILSVFGKLKVQTKVQDGKVHVVKDTVVAKPGDVIPTEALPILQKLGIMPVYVKLKIKVAYHEGLVIPAENLKLNLEGYRSNIAEAYRNAFTLAVEIAYPVPDVLKFTISKVFKNAIALASEIGYLTPESAQAVISKAVAKAYALATAISGKVDLGVQLPAAQQTQTQQSTAEEKKEEKKEEEKKGPSEEEIGSGLASLFG.

Low complexity predominate over residues 298-308 (AAQQTQTQQST). Residues 298 to 338 (AAQQTQTQQSTAEEKKEEKKEEEKKGPSEEEIGSGLASLFG) are disordered. The segment covering 309–325 (AEEKKEEKKEEEKKGPS) has biased composition (basic and acidic residues).

The protein belongs to the universal ribosomal protein uL10 family. In terms of assembly, part of the 50S ribosomal subunit. Forms part of the ribosomal stalk which helps the ribosome interact with GTP-bound translation factors. Forms a heptameric L10(L12)2(L12)2(L12)2 complex, where L10 forms an elongated spine to which the L12 dimers bind in a sequential fashion.

Forms part of the ribosomal stalk, playing a central role in the interaction of the ribosome with GTP-bound translation factors. This is Large ribosomal subunit protein uL10 from Saccharolobus islandicus (strain M.16.27) (Sulfolobus islandicus).